A 92-amino-acid polypeptide reads, in one-letter code: Small ribosomal subunit protein uS19 (92 aa).

Belongs to the universal ribosomal protein uS19 family.

Protein S19 forms a complex with S13 that binds strongly to the 16S ribosomal RNA. This chain is Small ribosomal subunit protein uS19, found in Vibrio campbellii (strain ATCC BAA-1116).